A 154-amino-acid chain; its full sequence is Protein X (154 aa).

The segment at 68-117 (PCALRFTSARRMETTVNAHQILPKVLHKRTLGLSAMSTTDLEAYFKDCLF) is mitochondrial targeting sequence.

This sequence belongs to the orthohepadnavirus protein X family. In terms of assembly, may form homodimer. May interact with host CEBPA, CFLAR, CREB1, DDB1, E4F1, HBXIP, HSPD1/HSP60, NFKBIA, POLR2E and SMAD4. Interacts with host SMC5-SMC6 complex and induces its degradation. Interacts with host TRPC4AP; leading to prevent ubiquitination of TRPC4AP. Interacts with host PLSCR1; this interaction promotes ubiquitination and degradation of HBx and impairs HBx-mediated cell proliferation. Post-translationally, a fraction may be phosphorylated in insect cells and HepG2 cells, a human hepatoblastoma cell line. Phosphorylated in vitro by host protein kinase C or mitogen-activated protein kinase. N-acetylated in insect cells.

The protein resides in the host cytoplasm. Its subcellular location is the host nucleus. The protein localises to the host mitochondrion. In terms of biological role, multifunctional protein that plays a role in silencing host antiviral defenses and promoting viral transcription. Does not seem to be essential for HBV infection. May be directly involved in development of cirrhosis and liver cancer (hepatocellular carcinoma). Most of cytosolic activities involve modulation of cytosolic calcium. The effect on apoptosis is controversial depending on the cell types in which the studies have been conducted. May induce apoptosis by localizing in mitochondria and causing loss of mitochondrial membrane potential. May also modulate apoptosis by binding host CFLAR, a key regulator of the death-inducing signaling complex (DISC). Promotes viral transcription by using the host E3 ubiquitin ligase DDB1 to target the SMC5-SMC6 complex to proteasomal degradation. This host complex would otherwise bind to viral episomal DNA, and prevents its transcription. Moderately stimulates transcription of many different viral and cellular transcription elements. Promoters and enhancers stimulated by HBx contain DNA binding sites for NF-kappa-B, AP-1, AP-2, c-EBP, ATF/CREB, or the calcium-activated factor NF-AT. The protein is Protein X of Hepatitis B virus genotype D subtype ayw (isolate France/Tiollais/1979) (HBV-D).